A 256-amino-acid chain; its full sequence is 5-keto-4-deoxy-D-glucarate aldolase (256 aa).

The active-site Proton acceptor is histidine 50. Glutamine 151 is a substrate binding site. Glutamate 153 contacts Mg(2+). 2 residues coordinate substrate: serine 178 and aspartate 179. Mg(2+) is bound at residue aspartate 179.

This sequence belongs to the HpcH/HpaI aldolase family. KDGluc aldolase subfamily. As to quaternary structure, homohexamer; trimer of dimers. The cofactor is Mg(2+).

It carries out the reaction 5-dehydro-4-deoxy-D-glucarate = 2-hydroxy-3-oxopropanoate + pyruvate. The catalysed reaction is 2-dehydro-3-deoxy-D-glucarate = 2-hydroxy-3-oxopropanoate + pyruvate. It functions in the pathway carbohydrate acid metabolism; galactarate degradation; D-glycerate from galactarate: step 2/3. Catalyzes the reversible retro-aldol cleavage of both 5-keto-4-deoxy-D-glucarate and 2-keto-3-deoxy-D-glucarate to pyruvate and tartronic semialdehyde. In Salmonella arizonae (strain ATCC BAA-731 / CDC346-86 / RSK2980), this protein is 5-keto-4-deoxy-D-glucarate aldolase.